Consider the following 506-residue polypeptide: Exopolyphosphatase (506 aa).

The protein belongs to the GppA/Ppx family. In terms of assembly, homodimer. Requires Mg(2+) as cofactor.

The protein resides in the cell membrane. It catalyses the reaction [phosphate](n) + H2O = [phosphate](n-1) + phosphate + H(+). The enzyme catalyses [phosphate](n) + ATP = [phosphate](n+1) + ADP. With respect to regulation, exopolyphosphatase activity is stimulated by NH(4)(+) and K(+). Phosphotransferase activity is insensitive to the addition of K(+) or NH(4)(+) ions. In terms of biological role, degradation of inorganic polyphosphates (polyP). Releases orthophosphate processively from the ends of the polyP chain. Also has polyphosphate:ADP phosphotransferase activity, catalyzing the production of ATP from ADP and polyP. This is Exopolyphosphatase from Pseudomonas aeruginosa (strain ATCC 15692 / DSM 22644 / CIP 104116 / JCM 14847 / LMG 12228 / 1C / PRS 101 / PAO1).